The sequence spans 150 residues: MNVILLDKIANLGNLGDQVSVKAGYARNFLLPQGKAVVANAANTEVFEARRAELEAKLAEELAAASARAEKITALEAVVIASKAGDEGKLFGSIGNRDVADAVTAAGVELAKSEVRLPLGALRNTGDFEVEVQLHTEVKAIVKLSVVAED.

The protein belongs to the bacterial ribosomal protein bL9 family.

In terms of biological role, binds to the 23S rRNA. In Shewanella piezotolerans (strain WP3 / JCM 13877), this protein is Large ribosomal subunit protein bL9.